Reading from the N-terminus, the 277-residue chain is Diaminopimelate epimerase (277 aa).

Asparagine 13, glutamine 46, and asparagine 66 together coordinate substrate. Cysteine 75 acts as the Proton donor in catalysis. Substrate is bound by residues 76-77 (GN), asparagine 159, asparagine 192, and 210-211 (ER). Cysteine 219 functions as the Proton acceptor in the catalytic mechanism. Position 220–221 (220–221 (GT)) interacts with substrate.

Belongs to the diaminopimelate epimerase family. In terms of assembly, homodimer.

Its subcellular location is the cytoplasm. It catalyses the reaction (2S,6S)-2,6-diaminopimelate = meso-2,6-diaminopimelate. Its pathway is amino-acid biosynthesis; L-lysine biosynthesis via DAP pathway; DL-2,6-diaminopimelate from LL-2,6-diaminopimelate: step 1/1. In terms of biological role, catalyzes the stereoinversion of LL-2,6-diaminopimelate (L,L-DAP) to meso-diaminopimelate (meso-DAP), a precursor of L-lysine and an essential component of the bacterial peptidoglycan. In Azoarcus sp. (strain BH72), this protein is Diaminopimelate epimerase.